Consider the following 482-residue polypeptide: Putative transposase R186 (482 aa).

Zn(2+) contacts are provided by Cys416, Cys419, Cys433, and Cys435.

The protein in the central section; belongs to the transposase 2 family. This sequence in the C-terminal section; belongs to the transposase 35 family.

This chain is Putative transposase R186, found in Acanthamoeba polyphaga (Amoeba).